The chain runs to 255 residues: tRNA (guanine-N(1)-)-methyltransferase (255 aa).

S-adenosyl-L-methionine is bound by residues Gly-113 and 133 to 138 (IGDYVL).

Belongs to the RNA methyltransferase TrmD family. Homodimer.

Its subcellular location is the cytoplasm. It catalyses the reaction guanosine(37) in tRNA + S-adenosyl-L-methionine = N(1)-methylguanosine(37) in tRNA + S-adenosyl-L-homocysteine + H(+). Specifically methylates guanosine-37 in various tRNAs. This Escherichia coli O6:K15:H31 (strain 536 / UPEC) protein is tRNA (guanine-N(1)-)-methyltransferase.